Consider the following 107-residue polypeptide: Universal stress protein B homolog (107 aa).

Transmembrane regions (helical) follow at residues 6-26 and 86-106; these read TILF…LTAL and VREL…AAFI.

The protein belongs to the universal stress protein B family.

The protein localises to the cell inner membrane. The sequence is that of Universal stress protein B homolog from Vibrio parahaemolyticus serotype O3:K6 (strain RIMD 2210633).